Here is a 201-residue protein sequence, read N- to C-terminus: Recombination protein RecR (201 aa).

The segment at 58-73 (CGRCGALTDVDPCGIC) adopts a C4-type zinc-finger fold. The 98-residue stretch at 81 to 178 (ETLCLVSEWD…RVTRLAQGIP (98 aa)) folds into the Toprim domain.

This sequence belongs to the RecR family.

May play a role in DNA repair. It seems to be involved in an RecBC-independent recombinational process of DNA repair. It may act with RecF and RecO. The protein is Recombination protein RecR of Nitratidesulfovibrio vulgaris (strain DSM 19637 / Miyazaki F) (Desulfovibrio vulgaris).